The primary structure comprises 434 residues: Enolase (434 aa).

Gln165 provides a ligand contact to (2R)-2-phosphoglycerate. Glu207 acts as the Proton donor in catalysis. Residues Asp244, Glu291, and Asp318 each contribute to the Mg(2+) site. (2R)-2-phosphoglycerate-binding residues include Lys343, Arg372, Ser373, and Lys394. Lys343 serves as the catalytic Proton acceptor.

It belongs to the enolase family. Mg(2+) serves as cofactor.

It localises to the cytoplasm. It is found in the secreted. The protein localises to the cell surface. The enzyme catalyses (2R)-2-phosphoglycerate = phosphoenolpyruvate + H2O. It functions in the pathway carbohydrate degradation; glycolysis; pyruvate from D-glyceraldehyde 3-phosphate: step 4/5. Catalyzes the reversible conversion of 2-phosphoglycerate (2-PG) into phosphoenolpyruvate (PEP). It is essential for the degradation of carbohydrates via glycolysis. The chain is Enolase from Staphylococcus saprophyticus subsp. saprophyticus (strain ATCC 15305 / DSM 20229 / NCIMB 8711 / NCTC 7292 / S-41).